Reading from the N-terminus, the 364-residue chain is Heavy metal-associated isoprenylated plant protein 35 (364 aa).

The span at 1-12 (MATDEMKSETKK) shows a compositional bias: basic and acidic residues. Residues 1–33 (MATDEMKSETKKTEHKQKQSTQIKQDLPPPTIP) are disordered. The 64-residue stretch at 39-102 (YKSCTLKVSI…KLNKAGKNAE (64 aa)) folds into the HMA domain. 2 residues coordinate a metal cation: C50 and C53. Positions 101 to 265 (AEQLPEIPDP…PPTATDYDRP (165 aa)) are disordered. A compositionally biased stretch (basic and acidic residues) spans 111 to 122 (VDNKPKPVDPKE). Residues 134–144 (QITNEATSSGI) are compositionally biased toward polar residues. Basic and acidic residues-rich tracts occupy residues 154-169 (ECDK…EKCL) and 180-198 (VKEE…KEES). Polar residues predominate over residues 237 to 253 (SLATTNNPTDGPARTQS). At C361 the chain carries Cysteine methyl ester. C361 carries the S-farnesyl cysteine lipid modification. A propeptide spans 362 to 364 (AIM) (removed in mature form).

The protein belongs to the HIPP family.

In terms of biological role, heavy-metal-binding protein. This chain is Heavy metal-associated isoprenylated plant protein 35, found in Arabidopsis thaliana (Mouse-ear cress).